The primary structure comprises 703 residues: Elongation factor G (703 aa).

In terms of domain architecture, tr-type G spans 10–286 (NKVRNIGIMA…AVVKFLPSPL (277 aa)). GTP is bound by residues 19–26 (AHIDAGKT), 83–87 (DTPGH), and 137–140 (NKLD).

The protein belongs to the TRAFAC class translation factor GTPase superfamily. Classic translation factor GTPase family. EF-G/EF-2 subfamily.

It is found in the cytoplasm. Functionally, catalyzes the GTP-dependent ribosomal translocation step during translation elongation. During this step, the ribosome changes from the pre-translocational (PRE) to the post-translocational (POST) state as the newly formed A-site-bound peptidyl-tRNA and P-site-bound deacylated tRNA move to the P and E sites, respectively. Catalyzes the coordinated movement of the two tRNA molecules, the mRNA and conformational changes in the ribosome. The sequence is that of Elongation factor G from Nocardioides sp. (strain ATCC BAA-499 / JS614).